Here is a 576-residue protein sequence, read N- to C-terminus: MSLGARGYRRCDTLADMRRRWYNNGPFQTLRMLEESSSEVTSSSALGLPPAMVMSPESLASPEIGGLELWGYDDGITYSMAQSLGTCTMEQQQPQPQQQPQQTQPLPSMPLPMPPTTPKSENESMSSGREELSPASSVNGCSTDGEARRQKKGPAPRQQEELCLVCGDRASGYHYNALTCEGCKGFFRRSVTKNAVYICKFGHACEMDIYMRRKCQECRLKKCLAVGMRPECVVPENQCAMKRKEKKAQREKDKLPVSTTTVDDHMPPIMQCDPPPPEAARILECVQHEVVPRFLNEKLMEQNRLKNVPPLTANQKSLIARLVWYQEGYEQPSEEDLKRVTQSDEDDEDSDMPFRQITEMTILTVQLIVEFAKGLPGFAKISQSDQITLLKACSSEVMMLRVARRYDAATDSVLFANNQAYTRDNYRKAGMAYVIEDLLHFCRCMYSMMMDNVHYALLTAIVIFSDRPGLEQPLLVEEIQRYYLNTLRVYILNQNSASPRGAVIFGEILGILTEIRTLGMQNSNMCISLKLKNRKLPPFLEEIWDVADVATTATPVAAEAPAPLAPAPPARPPATV.

Residues 1–162 (MSLGARGYRR…GPAPRQQEEL (162 aa)) are modulating. A disordered region spans residues 87 to 154 (CTMEQQQPQP…GEARRQKKGP (68 aa)). Low complexity predominate over residues 91–106 (QQQPQPQQQPQQTQPL). Residues 107 to 117 (PSMPLPMPPTT) are compositionally biased toward pro residues. 2 NR C4-type zinc fingers span residues 163 to 183 (CLVC…CEGC) and 199 to 223 (CKFG…LKKC). A DNA-binding region (nuclear receptor) is located at residues 163 to 235 (CLVCGDRASG…VGMRPECVVP (73 aa)). The tract at residues 245–269 (EKKAQREKDKLPVSTTTVDDHMPPI) is disordered. One can recognise an NR LBD domain in the interval 314–548 (NQKSLIARLV…FLEEIWDVAD (235 aa)).

The protein belongs to the nuclear hormone receptor family. NR1 subfamily.

It is found in the nucleus. Its function is as follows. Receptor for ecdysone. Binds to ecdysone response elements (ECRES). This Heliothis virescens (Tobacco budworm moth) protein is Ecdysone receptor (EcR).